The primary structure comprises 277 residues: Phosphoenolpyruvate synthase regulatory protein (277 aa).

G157–T164 serves as a coordination point for ADP.

It belongs to the pyruvate, phosphate/water dikinase regulatory protein family. PSRP subfamily.

It carries out the reaction [pyruvate, water dikinase] + ADP = [pyruvate, water dikinase]-phosphate + AMP + H(+). The catalysed reaction is [pyruvate, water dikinase]-phosphate + phosphate + H(+) = [pyruvate, water dikinase] + diphosphate. In terms of biological role, bifunctional serine/threonine kinase and phosphorylase involved in the regulation of the phosphoenolpyruvate synthase (PEPS) by catalyzing its phosphorylation/dephosphorylation. The polypeptide is Phosphoenolpyruvate synthase regulatory protein (Salmonella gallinarum (strain 287/91 / NCTC 13346)).